The following is a 132-amino-acid chain: Fibroblast growth factor 1 (132 aa).

Residues Asn-10 and 108–120 (KTKP…FGQK) each bind heparin.

It belongs to the heparin-binding growth factors family.

Its subcellular location is the secreted. It is found in the cytoplasm. It localises to the cell cortex. The protein resides in the cytosol. The protein localises to the nucleus. Functionally, plays an important role in the regulation of cell survival, cell division, angiogenesis, cell differentiation and cell migration. Functions as a potent mitogen in vitro. Acts as a ligand for FGFR1 and integrins. Binds to FGFR1 in the presence of heparin leading to FGFR1 dimerization and activation via sequential autophosphorylation on tyrosine residues which act as docking sites for interacting proteins, leading to the activation of several signaling cascades. Binds to integrins. Its binding to integrins and subsequent ternary complex formation with integrins and FGFR1 are essential for FGF1 signaling. The sequence is that of Fibroblast growth factor 1 (fgf1) from Notophthalmus viridescens (Eastern newt).